The following is a 431-amino-acid chain: Enolase (431 aa).

A disordered region spans residues 27 to 47; it reads LESGHSGRAAVPSGASTGSRE. Gln-163 is a binding site for (2R)-2-phosphoglycerate. The active-site Proton donor is Glu-205. Residues Asp-242, Glu-285, and Asp-312 each coordinate Mg(2+). Positions 337, 366, 367, and 388 each coordinate (2R)-2-phosphoglycerate. Lys-337 serves as the catalytic Proton acceptor.

The protein belongs to the enolase family. The cofactor is Mg(2+).

The protein resides in the cytoplasm. Its subcellular location is the secreted. It localises to the cell surface. It catalyses the reaction (2R)-2-phosphoglycerate = phosphoenolpyruvate + H2O. The protein operates within carbohydrate degradation; glycolysis; pyruvate from D-glyceraldehyde 3-phosphate: step 4/5. Catalyzes the reversible conversion of 2-phosphoglycerate (2-PG) into phosphoenolpyruvate (PEP). It is essential for the degradation of carbohydrates via glycolysis. This chain is Enolase, found in Oleidesulfovibrio alaskensis (strain ATCC BAA-1058 / DSM 17464 / G20) (Desulfovibrio alaskensis).